Here is a 156-residue protein sequence, read N- to C-terminus: Small ribosomal subunit protein uS7 (156 aa).

The protein belongs to the universal ribosomal protein uS7 family. In terms of assembly, part of the 30S ribosomal subunit. Contacts proteins S9 and S11.

Its function is as follows. One of the primary rRNA binding proteins, it binds directly to 16S rRNA where it nucleates assembly of the head domain of the 30S subunit. Is located at the subunit interface close to the decoding center, probably blocks exit of the E-site tRNA. The chain is Small ribosomal subunit protein uS7 from Shewanella sediminis (strain HAW-EB3).